We begin with the raw amino-acid sequence, 120 residues long: Small ribosomal subunit protein uS13 (120 aa).

The disordered stretch occupies residues 92–120; sequence RRGLPCRGQRTRTNARTRKGPRKPIAGKK.

It belongs to the universal ribosomal protein uS13 family. In terms of assembly, part of the 30S ribosomal subunit. Forms a loose heterodimer with protein S19. Forms two bridges to the 50S subunit in the 70S ribosome.

Located at the top of the head of the 30S subunit, it contacts several helices of the 16S rRNA. In the 70S ribosome it contacts the 23S rRNA (bridge B1a) and protein L5 of the 50S subunit (bridge B1b), connecting the 2 subunits; these bridges are implicated in subunit movement. Contacts the tRNAs in the A and P-sites. The polypeptide is Small ribosomal subunit protein uS13 (Laribacter hongkongensis (strain HLHK9)).